Reading from the N-terminus, the 159-residue chain is Endoribonuclease YbeY (159 aa).

Zn(2+)-binding residues include His-125, His-129, and His-135.

Belongs to the endoribonuclease YbeY family. Zn(2+) serves as cofactor.

It is found in the cytoplasm. In terms of biological role, single strand-specific metallo-endoribonuclease involved in late-stage 70S ribosome quality control and in maturation of the 3' terminus of the 16S rRNA. The chain is Endoribonuclease YbeY from Limosilactobacillus reuteri (strain DSM 20016) (Lactobacillus reuteri).